A 371-amino-acid chain; its full sequence is Phospho-N-acetylmuramoyl-pentapeptide-transferase (371 aa).

A run of 9 helical transmembrane segments spans residues leucine 19–glycine 39, isoleucine 48–proline 68, threonine 95–alanine 115, asparagine 119–phenylalanine 139, alanine 155–leucine 175, isoleucine 180–isoleucine 200, alanine 227–phenylalanine 247, alanine 284–valine 304, and valine 349–alanine 369.

This sequence belongs to the glycosyltransferase 4 family. MraY subfamily. It depends on Mg(2+) as a cofactor.

The protein localises to the cell inner membrane. The enzyme catalyses UDP-N-acetyl-alpha-D-muramoyl-L-alanyl-gamma-D-glutamyl-meso-2,6-diaminopimeloyl-D-alanyl-D-alanine + di-trans,octa-cis-undecaprenyl phosphate = di-trans,octa-cis-undecaprenyl diphospho-N-acetyl-alpha-D-muramoyl-L-alanyl-D-glutamyl-meso-2,6-diaminopimeloyl-D-alanyl-D-alanine + UMP. It participates in cell wall biogenesis; peptidoglycan biosynthesis. Catalyzes the initial step of the lipid cycle reactions in the biosynthesis of the cell wall peptidoglycan: transfers peptidoglycan precursor phospho-MurNAc-pentapeptide from UDP-MurNAc-pentapeptide onto the lipid carrier undecaprenyl phosphate, yielding undecaprenyl-pyrophosphoryl-MurNAc-pentapeptide, known as lipid I. The polypeptide is Phospho-N-acetylmuramoyl-pentapeptide-transferase (Acaryochloris marina (strain MBIC 11017)).